Reading from the N-terminus, the 254-residue chain is Low affinity immunoglobulin gamma Fc region receptor III-A (254 aa).

The signal sequence occupies residues 1–16; that stretch reads MWQLLLPTALLLLVSA. Topologically, residues 17–208 are extracellular; it reads GMRTEDLPKA…ISSFFPPGYQ (192 aa). Ig-like C2-type domains lie at 24–105 and 107–189; these read PKAV…LEVH and GWLL…VNIT. A disulfide bridge connects residues Cys47 and Cys89. Residues Asn56, Asn63, and Asn92 are each glycosylated (N-linked (GlcNAc...) asparagine). A disulfide bridge links Cys128 with Cys172. Asn180 and Asn187 each carry an N-linked (GlcNAc...) asparagine glycan. Residues 209–229 traverse the membrane as a helical segment; that stretch reads VSFCLVMVLLFAVDTGLYFSV. The Cytoplasmic portion of the chain corresponds to 230–254; that stretch reads KTNIRSSTRDWKDHKFKWRKDPQDK. Ser236 is modified (phosphoserine; by PKC). Thr237 is modified (phosphothreonine; by PKC).

Forms a heterooligomeric complex with ITAM-containing signaling subunits, either a homodimer of CD247, a homodimer of FCER1G or a heterodimer of CD247 and FCER1G. Interacts (via transmembrane domain) with signaling subunits; this interaction is a prerequisite for receptor complex expression on the cell surface and intracellular signal transduction. Binds the Fc region of antigen-complexed IgG with a preference for IgG1 and IgG3 isotypes. Interacts with CD2; this interaction is involved in NK cell activation and cytotoxicity. Interacts with S100A4; this interaction inhibits PKC-dependent phosphorylation of FCGR3A. In terms of processing, glycosylated. Contains high mannose- and complex-type oligosaccharides. Glycosylation at Asn-180 is mandatory for high affinity binding to the Fc and for discrimination between fucosylated and afucosylated IgG glycoforms. Post-translationally, undergoes rapid ectodomain shedding upon NK cell stimulation. The soluble form is produced by a proteolytic cleavage mediated by ADAM17. Repeated stimulation causes receptor shedding, a mechanism that allows for increased NK cell motility and detachment from opsonized target cells while avoiding activation-induced NK cell apoptosis. Phosphorylated at RSSTR motif by PKC. The relevant physiological PKCs might be PRKCI, PRKCG, PRKCE, PRKCH and PRKCQ. In terms of tissue distribution, expressed in natural killer cells (at protein level). Expressed in a subset of circulating monocytes (at protein level).

It localises to the cell membrane. The protein localises to the secreted. Its function is as follows. Receptor for the invariable Fc fragment of immunoglobulin gamma (IgG). Optimally activated upon binding of clustered antigen-IgG complexes displayed on cell surfaces, triggers lysis of antibody-coated cells, a process known as antibody-dependent cellular cytotoxicity (ADCC). Does not bind free monomeric IgG, thus avoiding inappropriate effector cell activation in the absence of antigenic trigger. Mediates IgG effector functions on natural killer (NK) cells. Binds antigen-IgG complexes generated upon infection and triggers NK cell-dependent cytokine production and degranulation to limit viral load and propagation. Involved in the generation of memory-like adaptive NK cells capable to produce high amounts of IFNG and to efficiently eliminate virus-infected cells via ADCC. Regulates NK cell survival and proliferation, in particular by preventing NK cell progenitor apoptosis. Fc-binding subunit that associates with CD247 and/or FCER1G adapters to form functional signaling complexes. Following the engagement of antigen-IgG complexes, triggers phosphorylation of immunoreceptor tyrosine-based activation motif (ITAM)-containing adapters with subsequent activation of phosphatidylinositol 3-kinase signaling and sustained elevation of intracellular calcium that ultimately drive NK cell activation. The ITAM-dependent signaling coupled to receptor phosphorylation by PKC mediates robust intracellular calcium flux that leads to production of pro-inflammatory cytokines, whereas in the absence of receptor phosphorylation it mainly activates phosphatidylinositol 3-kinase signaling leading to cell degranulation. Costimulates NK cells and trigger lysis of target cells independently of IgG binding. Mediates the antitumor activities of therapeutic antibodies. Upon ligation on monocytes triggers TNFA-dependent ADCC of IgG-coated tumor cells. Mediates enhanced ADCC in response to afucosylated IgGs. Functionally, (Microbial infection) Involved in Dengue virus pathogenesis via antibody-dependent enhancement (ADE) mechanism. Secondary infection with Dengue virus triggers elevated levels of afucosylated non-neutralizing IgG1s with reactivity to viral envelope/E protein. Viral antigen-IgG1 complexes bind with high affinity to FCGR3A, facilitating virus entry in myeloid cells and subsequent viral replication. The polypeptide is Low affinity immunoglobulin gamma Fc region receptor III-A (Homo sapiens (Human)).